The chain runs to 360 residues: POU domain, class 5, transcription factor 1 (360 aa).

2 disordered regions span residues 1 to 52 (MAGH…PGVG) and 88 to 114 (GGLE…SPEP). The 9aaTAD motif lies at 4–12 (HLASDFAFS). A Phosphoserine; by MAPK modification is found at serine 111. A Glycyl lysine isopeptide (Lys-Gly) (interchain with G-Cter in SUMO) cross-link involves residue lysine 123. One can recognise a POU-specific domain in the interval 138-212 (DIKALQKELE…LLQKWVEEAD (75 aa)). Residues arginine 157 and glutamine 164 each contribute to the DNA site. DNA-binding stretches follow at residues 180 to 186 (SQTTICR) and 193 to 196 (SFKN). A DNA-binding region (homeobox) is located at residues 230–289 (RKRKRTSIENRVRGNLENLFLQCPKPTLQQISHIAQQLGLEKDVVRVWFCNRRQKGKRSS). The residue at position 235 (threonine 235) is a Phosphothreonine. 4 positions are modified to phosphoserine: serine 236, serine 289, serine 290, and serine 355.

It belongs to the POU transcription factor family. Class-5 subfamily. As to quaternary structure, interacts with PKM. Interacts with WWP2. Interacts with UBE2I and ZSCAN10. Interacts with PCGF1. Interacts with ESRRB; recruits ESRRB near the POU5F1-SOX2 element in the NANOG proximal promoter; the interaction is DNA independent. Interacts with ZNF322. Interacts with MAPK8 and MAPK9; the interaction allows MAPK8 and MAPK9 to phosphorylate POU5F1 on Ser-355. Interacts (when phosphorylated on Ser-355) with FBXW8. Interacts with FBXW4. Interacts with SOX2 and SOX15; binds synergistically with either SOX2 or SOX15 to DNA. Interacts with DDX56. In terms of processing, sumoylation enhances the protein stability, DNA binding and transactivation activity. Sumoylation is required for enhanced YES1 expression. Post-translationally, ubiquitinated; undergoes 'Lys-63'-linked polyubiquitination by WWP2 leading to proteasomal degradation. ERK1/2-mediated phosphorylation at Ser-111 promotes nuclear exclusion and proteasomal degradation. Phosphorylation at Thr-235 and Ser-236 decrease DNA-binding and alters ability to activate transcription. As to expression, expressed in developing brain. Highest levels found in specific cell layers of the cortex, the olfactory bulb, the hippocampus and the cerebellum. Low levels of expression in adult tissues.

Its subcellular location is the cytoplasm. The protein localises to the nucleus. Transcription factor that binds to the octamer motif (5'-ATTTGCAT-3'). Forms a trimeric complex with SOX2 or SOX15 on DNA and controls the expression of a number of genes involved in embryonic development such as YES1, FGF4, UTF1 and ZFP206. Critical for early embryogenesis and for embryonic stem cell pluripotency. This chain is POU domain, class 5, transcription factor 1 (POU5F1), found in Homo sapiens (Human).